We begin with the raw amino-acid sequence, 460 residues long: Ankyrin repeat and MYND domain-containing protein 2 (460 aa).

ANK repeat units lie at residues 45-74 (HGMT…DVNC), 79-108 (HGYT…ETDV), and 159-188 (KLAG…NPLL). Zn(2+) contacts are provided by Cys320, Cys323, Cys332, Cys335, Cys341, Cys345, His353, and Cys357. Residues 320–357 (CTTCGEKGADKRCSVCKVVMYCDQNCQKTHWFTHKKVC) form an MYND-type zinc finger. 2 stretches are compositionally biased toward basic and acidic residues: residues 371-387 (AAKE…KDEA) and 425-436 (ELTKEPEARAPR). The tract at residues 371–460 (AAKEKRRQEK…ALQKIQDSEE (90 aa)) is disordered.

It is found in the cell projection. The protein localises to the cilium. May be involved in the trafficking of signaling proteins to the cilia. The polypeptide is Ankyrin repeat and MYND domain-containing protein 2 (ANKMY2) (Gallus gallus (Chicken)).